The chain runs to 459 residues: E3 ubiquitin-protein ligase RNF25 (459 aa).

The region spanning 18-128 (SEVEVLESIY…EKGKEILTDN (111 aa)) is the RWD domain. Residues C135, C138, C153, H155, H158, C161, C198, and C201 each contribute to the Zn(2+) site. The RING-type zinc-finger motif lies at 135–202 (CVICLYGFQE…AVGVQCPVCR (68 aa)). 2 disordered regions span residues 268 to 309 (PPAP…PPLP) and 322 to 459 (TRSN…KDGS). Over residues 282-303 (KGSQPPSTLAAELSTSPAVQST) the composition is skewed to polar residues. 4 stretches are compositionally biased toward basic and acidic residues: residues 349 to 370 (QPERRHPKGGECHAPKGTRDTQ), 378 to 389 (PLKEPMDLKPEP), 413 to 424 (RTRDCVRWERSK), and 446 to 459 (TRRESLGLESKDGS). S450 is subject to Phosphoserine.

It belongs to the RNF25 family. As to quaternary structure, interacts with UBE2D2, and may also interact with UBE2E1 and UBE2E3. Interacts with RELA/p65. Ubiquitinated; autoubiquitinated.

The protein resides in the cytoplasm. It carries out the reaction S-ubiquitinyl-[E2 ubiquitin-conjugating enzyme]-L-cysteine + [acceptor protein]-L-lysine = [E2 ubiquitin-conjugating enzyme]-L-cysteine + N(6)-ubiquitinyl-[acceptor protein]-L-lysine.. Its pathway is protein modification; protein ubiquitination. Functionally, E3 ubiquitin-protein ligase that plays a key role in the RNF14-RNF25 translation quality control pathway, a pathway that takes place when a ribosome has stalled during translation, and which promotes ubiquitination and degradation of translation factors on stalled ribosomes. Catalyzes ubiquitination of RPS27A in response to ribosome collisions, promoting activation of RNF14. RNF25 catalyzes ubiquitination of other ribosomal proteins on stalled ribosomes, such as RPL0, RPL1, RPL12, RPS13 and RPS17. Also involved in ubiquitination and degradation of stalled ETF1/eRF1. Independently of its function in the response to stalled ribosomes, mediates ubiquitination and subsequent proteasomal degradation of NKD2. May also stimulate transcription mediated by NF-kappa-B via its interaction with RELA/p65. The polypeptide is E3 ubiquitin-protein ligase RNF25 (Homo sapiens (Human)).